A 174-amino-acid chain; its full sequence is ATP-dependent protease subunit HslV (174 aa).

Thr-2 is an active-site residue. Na(+) is bound by residues Gly-157, Asp-160, and Thr-163.

The protein belongs to the peptidase T1B family. HslV subfamily. A double ring-shaped homohexamer of HslV is capped on each side by a ring-shaped HslU homohexamer. The assembly of the HslU/HslV complex is dependent on binding of ATP.

It localises to the cytoplasm. It carries out the reaction ATP-dependent cleavage of peptide bonds with broad specificity.. Its activity is regulated as follows. Allosterically activated by HslU binding. Its function is as follows. Protease subunit of a proteasome-like degradation complex believed to be a general protein degrading machinery. In Aliivibrio fischeri (strain MJ11) (Vibrio fischeri), this protein is ATP-dependent protease subunit HslV.